We begin with the raw amino-acid sequence, 67 residues long: Large ribosomal subunit protein bL32 (67 aa).

Residues Met1 to Gln19 are compositionally biased toward basic residues. A disordered region spans residues Met1 to Trp20.

Belongs to the bacterial ribosomal protein bL32 family.

The chain is Large ribosomal subunit protein bL32 from Leifsonia xyli subsp. xyli (strain CTCB07).